A 319-amino-acid polypeptide reads, in one-letter code: Pantothenate kinase (319 aa).

96 to 103 is an ATP binding site; it reads GSVAVGKS.

Belongs to the prokaryotic pantothenate kinase family.

It localises to the cytoplasm. It carries out the reaction (R)-pantothenate + ATP = (R)-4'-phosphopantothenate + ADP + H(+). Its pathway is cofactor biosynthesis; coenzyme A biosynthesis; CoA from (R)-pantothenate: step 1/5. The chain is Pantothenate kinase (coaA) from Bacillus subtilis (strain 168).